We begin with the raw amino-acid sequence, 1301 residues long: ABC transporter BEA3 (1301 aa).

Residues 1 to 30 are disordered; sequence MGKRTAENSAANGEGEEKHPEIGVDGRPEK. The segment covering 15 to 30 has biased composition (basic and acidic residues); it reads GEEKHPEIGVDGRPEK. The next 4 helical transmembrane spans lie at 54 to 74, 103 to 123, 177 to 197, and 203 to 223; these read VGVIASIGVGITLPLLNIVFG, LYLLGLFLGRLVLGYITNFAF, LGVFVEYNATMIASIIVAFIY, and LVTFTAVVFITFSVSLVLPYI. One can recognise an ABC transmembrane type-1 1 domain in the interval 54-345; the sequence is VGVIASIGVG…ISTPLLAVSK (292 aa). The N-linked (GlcNAc...) asparagine glycan is linked to Asn229. The next 2 helical transmembrane spans lie at 281 to 301 and 313 to 333; these read FIALQYGLVFFSSYAAFGLAF and INQLGAIIVVLFSVMMIVTAM. One can recognise an ABC transporter 1 domain in the interval 378–667; that stretch reads IILEDVTFAY…EAGLYYNLVN (290 aa). 413–420 contacts ATP; it reads GPSGSGKS. Positions 442–454 are enriched in basic and acidic residues; it reads VEKPTDKKNNGGK. Residues 442–461 form a disordered region; sequence VEKPTDKKNNGGKEEDEQEL. N-linked (GlcNAc...) asparagine glycans are attached at residues Asn511 and Asn618. The tract at residues 682 to 708 is disordered; sequence VIAKEERPSSVHEKAHTESTIEEKPLE. The ABC transmembrane type-1 2 domain occupies 735–1024; it reads ALTLFFSACA…ALSFGPNVAQ (290 aa). 6 helical membrane passes run 745–765, 779–799, 858–878, 880–900, 961–981, and 987–1007; these read GAAVPFQAWLFAKVIIVFGYL, SLMWTVLAISAGLAYCATFFL, SVFIALWTLMGTIAIALAFAW, LALVSLCVVVPILLAAGYWRM, WVSLLYAFSDSATIGCQAIVL, and LLLSGEYDLESFFVCFMSVLN. The ABC transporter 2 domain maps to 1060 to 1296; that stretch reads IELENIYFKY…RGVYWQMCQS (237 aa). 1094 to 1101 lines the ATP pocket; that stretch reads GASGSGKS.

It belongs to the ABC transporter superfamily. ABCB family. Multidrug resistance exporter (TC 3.A.1.201) subfamily.

It localises to the cell membrane. ABC transporter; part of the gene cluster that mediates the biosynthesis of beauvericin (BEA), a non-ribosomal cyclic hexadepsipeptide that shows antibiotic, antifungal, insecticidal, and cancer cell antiproliferative and antihaptotactic activity. Functions as a regulator of beauvericin production, rather than in BEA transport out of the cell. Beauvericin has low toxicity to the producing fungus and BEA3 does not play a role in detoxification and self-protection of the producing fungus. This Gibberella fujikuroi (strain CBS 195.34 / IMI 58289 / NRRL A-6831) (Bakanae and foot rot disease fungus) protein is ABC transporter BEA3.